Reading from the N-terminus, the 249-residue chain is tRNA (guanine-N(1)-)-methyltransferase (249 aa).

Residues Gly116 and Ile136 to Leu141 each bind S-adenosyl-L-methionine.

The protein belongs to the RNA methyltransferase TrmD family. In terms of assembly, homodimer.

The protein localises to the cytoplasm. The catalysed reaction is guanosine(37) in tRNA + S-adenosyl-L-methionine = N(1)-methylguanosine(37) in tRNA + S-adenosyl-L-homocysteine + H(+). In terms of biological role, specifically methylates guanosine-37 in various tRNAs. This Zymomonas mobilis subsp. mobilis (strain ATCC 31821 / ZM4 / CP4) protein is tRNA (guanine-N(1)-)-methyltransferase.